The chain runs to 375 residues: DNA replication and repair protein RecF (375 aa).

30–37 (GENAQGKT) is a binding site for ATP.

The protein belongs to the RecF family.

The protein resides in the cytoplasm. In terms of biological role, the RecF protein is involved in DNA metabolism; it is required for DNA replication and normal SOS inducibility. RecF binds preferentially to single-stranded, linear DNA. It also seems to bind ATP. The polypeptide is DNA replication and repair protein RecF (Bacillus anthracis (strain A0248)).